The chain runs to 152 residues: UPF0225 protein YchJ (152 aa).

The protein belongs to the UPF0225 family.

This chain is UPF0225 protein YchJ, found in Shigella dysenteriae serotype 1 (strain Sd197).